A 388-amino-acid polypeptide reads, in one-letter code: Quinolone resistance protein NorA (388 aa).

The next 12 helical transmembrane spans lie at 5–25, 42–62, 69–89, 99–119, 129–149, 157–177, 201–221, 239–259, 269–289, 293–313, 331–351, and 355–375; these read IFVLYFNIFLIFLGIGLVIPV, LLVAAFALSQMIISPFGGTLA, LIICIGLILFSVSEFMFAVGH, VIGGMSAGMVMPGVTGLIADV, FGYMSAIINSGFILGPGIGGF, MPFYFAGALGILAFIMSVVLI, WKVFITPAILTLVLAFGLSAF, DISIAITGGGIFGALFQIYFF, LTFIAWSLIYSVIVLVLLVIA, WTIMVISFAVFIGFDMIRPAI, LNSTFTSMGNFIGPLIAGALF, and IEAPIYMAIGVSLAGVVIVLI.

This sequence belongs to the major facilitator superfamily. TCR/Tet family.

It localises to the cell membrane. Its function is as follows. Involved in quinolone resistance. May constitute a membrane-associated active efflux pump of hydrophilic quinolones. In Staphylococcus aureus (strain MRSA252), this protein is Quinolone resistance protein NorA (norA).